We begin with the raw amino-acid sequence, 209 residues long: Tumor suppressor candidate gene 1 protein (209 aa).

3 disordered regions span residues 1-55, 111-157, and 172-209; these read MWRM…DGAR, ALRL…LRAR, and LHLE…GPWL. Positions 14 to 47 are enriched in gly residues; it reads CCGGDGAADGRGPGRSGRARGGGSPSGGGGGVGW. Residues 70-114 are a coiled coil; that stretch reads LEAIRARDEWDRQNARLRQENARLRLENRRLKRENRSLFRQALRL. The span at 125-149 shows a compositional bias: basic and acidic residues; it reads EARRVPEEASTNRRARDSGREDEPG. Ser-150 bears the Phosphoserine mark. A coiled-coil region spans residues 152-177; the sequence is RALRARLEKLEAMYRRALLQLHLEQR. Residues 174–188 are compositionally biased toward basic and acidic residues; it reads LEQRGPRPSGDKEEQ.

As to expression, widely expressed at low level. Expressed at higher level in testis, weakly expressed in muscle, colon, lung and spleen. Not detected in 3 non small cell lung carcinoma (NSCLC) cell lines with homozygous deletion of the 9p region, while it is down-regulated in 3 other tumor cell lines.

This is Tumor suppressor candidate gene 1 protein (TUSC1) from Homo sapiens (Human).